Consider the following 246-residue polypeptide: MKTNIFFIFLISILNQIYALFNNSYYSNLEQECIKNILNCTQSKTLSLLEPIDQAPIPKSDIISRLLYHTPYISRRDQVLIDEDFLETFYLLYNNPNQLHTLLSLIKDSESGHNWLGFLNNFERCLSDNTLLTCRDNVCKSYSYEKLKFTGNIFVENIIGFEFNIPSNMINFNMSILIYLENEETRTQRIVRIDHHGINVFDALLNCLRYFSRYYNFSFPLIQEMEKYNEVLPFRSEFSNLLIRTY.

An N-terminal signal peptide occupies residues 1 to 19 (MKTNIFFIFLISILNQIYA). In terms of domain architecture, gL betaherpesvirus-type spans 29 to 235 (LEQECIKNIL…EKYNEVLPFR (207 aa)). A disulfide bridge connects residues cysteine 134 and cysteine 139.

Belongs to the herpesviridae glycoprotein L (gL) family. Betaherpesvirinae gL subfamily. As to quaternary structure, interacts with glycoprotein H (gH); this interaction is necessary for the correct processing and cell surface expression of gH.

It localises to the virion membrane. Its subcellular location is the host cell membrane. The protein resides in the host Golgi apparatus. The protein localises to the host trans-Golgi network. Functionally, the heterodimer glycoprotein H-glycoprotein L is required for the fusion of viral and plasma membranes leading to virus entry into the host cell. Acts as a functional inhibitor of gH and maintains gH in an inhibited form. Upon binding to host integrins, gL dissociates from gH leading to activation of the viral fusion glycoproteins gB and gH. This is Envelope glycoprotein L from Homo sapiens (Human).